Reading from the N-terminus, the 118-residue chain is NADH-quinone oxidoreductase subunit A (118 aa).

The next 3 membrane-spanning stretches (helical) occupy residues 5–25 (YAFI…PLVL), 62–82 (LYAL…PWAV), and 87–107 (LGLF…IGLV).

It belongs to the complex I subunit 3 family. In terms of assembly, NDH-1 is composed of 14 different subunits. Subunits NuoA, H, J, K, L, M, N constitute the membrane sector of the complex.

Its subcellular location is the cell membrane. It catalyses the reaction a quinone + NADH + 5 H(+)(in) = a quinol + NAD(+) + 4 H(+)(out). Its function is as follows. NDH-1 shuttles electrons from NADH, via FMN and iron-sulfur (Fe-S) centers, to quinones in the respiratory chain. The immediate electron acceptor for the enzyme in this species is believed to be ubiquinone. Couples the redox reaction to proton translocation (for every two electrons transferred, four hydrogen ions are translocated across the cytoplasmic membrane), and thus conserves the redox energy in a proton gradient. This chain is NADH-quinone oxidoreductase subunit A, found in Herpetosiphon aurantiacus (strain ATCC 23779 / DSM 785 / 114-95).